The following is a 202-amino-acid chain: MADS-box transcription factor 33 (202 aa).

Positions 1–61 (MVRGKVQMRR…GKLHELATNG (61 aa)) constitute an MADS-box domain. In terms of domain architecture, K-box spans 87 to 177 (QQVAEQGIFL…QEKVKEQQKL (91 aa)).

In terms of tissue distribution, expressed in seedling roots.

It is found in the nucleus. Probable transcription factor. This chain is MADS-box transcription factor 33 (MADS33), found in Oryza sativa subsp. japonica (Rice).